We begin with the raw amino-acid sequence, 959 residues long: Leucine--tRNA ligase (959 aa).

A 'HIGH' region motif is present at residues 39-49 (PYVNAYPHLGS). The 'KMSKS' region signature appears at 637 to 641 (KMSKS). Lysine 640 serves as a coordination point for ATP. The segment at 933 to 959 (TEEDGGSPRRANALPGRPALYAEKRGG) is disordered.

This sequence belongs to the class-I aminoacyl-tRNA synthetase family.

It localises to the cytoplasm. It catalyses the reaction tRNA(Leu) + L-leucine + ATP = L-leucyl-tRNA(Leu) + AMP + diphosphate. In Aeropyrum pernix (strain ATCC 700893 / DSM 11879 / JCM 9820 / NBRC 100138 / K1), this protein is Leucine--tRNA ligase.